The chain runs to 247 residues: Probable chemoreceptor glutamine deamidase CheD (247 aa).

Residues 204–247 (KRPAAPQPARPRIELFGGRGTTPGAGSQAAGSPYAANLSRKQEA) are disordered.

It belongs to the CheD family.

It catalyses the reaction L-glutaminyl-[protein] + H2O = L-glutamyl-[protein] + NH4(+). Functionally, probably deamidates glutamine residues to glutamate on methyl-accepting chemotaxis receptors (MCPs), playing an important role in chemotaxis. In Burkholderia orbicola (strain MC0-3), this protein is Probable chemoreceptor glutamine deamidase CheD.